The primary structure comprises 178 residues: Small ribosomal subunit protein uS7c (178 aa).

Residues 137–146 (QKKEEIEKSK) are compositionally biased toward basic and acidic residues. Positions 137–178 (QKKEEIEKSKSPVNNNKKFISKNKKSKNKKQKKRLKRKKNIY) are disordered. Over residues 155 to 178 (FISKNKKSKNKKQKKRLKRKKNIY) the composition is skewed to basic residues.

This sequence belongs to the universal ribosomal protein uS7 family. As to quaternary structure, part of the 30S ribosomal subunit.

The protein localises to the plastid. In terms of biological role, one of the primary rRNA binding proteins, it binds directly to 16S rRNA where it nucleates assembly of the head domain of the 30S subunit. The sequence is that of Small ribosomal subunit protein uS7c (rps7) from Euglena longa (Euglenophycean alga).